The primary structure comprises 219 residues: 7-cyano-7-deazaguanine synthase (219 aa).

10–20 (FSGGQDSTTCL) lines the ATP pocket. Cys186, Cys195, Cys198, and Cys201 together coordinate Zn(2+).

Belongs to the QueC family. As to quaternary structure, homodimer. Zn(2+) is required as a cofactor.

The enzyme catalyses 7-carboxy-7-deazaguanine + NH4(+) + ATP = 7-cyano-7-deazaguanine + ADP + phosphate + H2O + H(+). It functions in the pathway purine metabolism; 7-cyano-7-deazaguanine biosynthesis. Catalyzes the ATP-dependent conversion of 7-carboxy-7-deazaguanine (CDG) to 7-cyano-7-deazaguanine (preQ(0)). This is 7-cyano-7-deazaguanine synthase from Bacillus licheniformis (strain ATCC 14580 / DSM 13 / JCM 2505 / CCUG 7422 / NBRC 12200 / NCIMB 9375 / NCTC 10341 / NRRL NRS-1264 / Gibson 46).